A 145-amino-acid chain; its full sequence is Transcriptional regulator ZitR (145 aa).

Residues 1-142 (MSLANQIDQF…ISQFLSVLTE (142 aa)) form the HTH marR-type domain. Residues glutamate 23, cysteine 29, glutamate 40, and histidine 41 each contribute to the Zn(2+) site. The segment at residues 53-76 (NARIAEQLKISPAAVTKALKKLQE) is a DNA-binding region (H-T-H motif). 3 residues coordinate Zn(2+): glutamate 106, histidine 107, and histidine 111.

As to quaternary structure, homodimer.

Zinc acts as a corepressor and is required for DNA-binding activity. Binds up to two zinc ligands per monomer. Inactive under zinc deprivation. Its function is as follows. Zinc-responsive regulator that represses expression of the zit operon in the presence of zinc. Acts by binding two palindromic operator sites overlapping the -35 and -10 boxes of the zit promoter. Could be a sensitive sensor of intracellular zinc to efficiently respond to zinc variations in the environment. The chain is Transcriptional regulator ZitR (zitR) from Lactococcus lactis subsp. cremoris (strain MG1363).